An 898-amino-acid polypeptide reads, in one-letter code: Histone-lysine N-methyltransferase mes-4 (898 aa).

Residues 1 to 68 (MLPSSGDSSK…APILTNAPKD (68 aa)) form a disordered region. Over residues 36–51 (QRNATPQGAGSETSSN) the composition is skewed to polar residues. 2 PHD-type zinc fingers span residues 126-214 (DSKC…CNLD) and 303-355 (IKAC…CVCG). One can recognise an SET domain in the interval 537–665 (EKIKLAATLC…DGDEITFSYN (129 aa)). The Post-SET domain occupies 671 to 687 (NLPDCECGAENCMGTMG). Residues 689–847 (AKREKPEVAD…SLQTIQETGK (159 aa)) are disordered. The segment covering 692–704 (EKPEVADSSEKAA) has biased composition (basic and acidic residues). Basic residues predominate over residues 705–719 (KKNKSSKKKSVKNQN). Low complexity-rich tracts occupy residues 737 to 751 (ISPS…SSTS) and 761 to 773 (SQNK…NSNQ). A compositionally biased stretch (polar residues) spans 774–788 (PVADTGSTLSTSTEL). A compositionally biased stretch (low complexity) spans 802–811 (SSRSRAASSS).

The protein belongs to the class V-like SAM-binding methyltransferase superfamily. Histone-lysine methyltransferase family. SET2 subfamily. In adults, it is predominantly expressed in the germline, and weakly expressed in intestinal cells.

Its subcellular location is the nucleus. The protein resides in the chromosome. It catalyses the reaction L-lysyl(36)-[histone H3] + 2 S-adenosyl-L-methionine = N(6),N(6)-dimethyl-L-lysyl(36)-[histone H3] + 2 S-adenosyl-L-homocysteine + 2 H(+). In terms of biological role, histone methyltransferase. Dimethylates 'Lys-36' of histone H3, a specific tag for epigenetic transcriptional activation. Plays a central role in early development and is responsible for all H3 'Lys-36' dimethylation until about the 40-cell stage. Indirectly involved in the global inactivation of the X chromosomes in germline cells, possibly by excluding the mes-2-mes-3-mes-6 repressive Polycomb complex from the autosomes. Not related to transcription elongation. Required for small-RNA-induced H3K27 trimethylation. May suppress sensitivity to RNAi. May regulate the expression of genes required for vulval development. This chain is Histone-lysine N-methyltransferase mes-4, found in Caenorhabditis elegans.